Here is a 1048-residue protein sequence, read N- to C-terminus: Self-sufficient cytochrome P450 monooxygenase CYP505E4 (1048 aa).

Cys-405 contacts heme. The 142-residue stretch at 499-640 folds into the Flavodoxin-like domain; the sequence is VSFFYGSNSG…DLEVWEETNL (142 aa). Residues 505–509 and 584–616 contribute to the FMN site; these read SNSGT and VFGCGHQDWTKTFYRIPILIDNLMYKAGATRLA. In terms of domain architecture, FAD-binding FR-type spans 678–906; the sequence is RDLIEAKVTA…RPAKDAFHLP (229 aa).

The protein in the N-terminal section; belongs to the cytochrome P450 family. It depends on FAD as a cofactor. The cofactor is FMN. Heme serves as cofactor.

The catalysed reaction is 2 oxidized [cytochrome P450] + NADPH = 2 reduced [cytochrome P450] + NADP(+) + H(+). The enzyme catalyses an organic molecule + reduced [NADPH--hemoprotein reductase] + O2 = an alcohol + oxidized [NADPH--hemoprotein reductase] + H2O + H(+). It carries out the reaction dodecanoate + reduced [NADPH--hemoprotein reductase] + O2 = 5-hydroxydodecanoate + oxidized [NADPH--hemoprotein reductase] + H2O + H(+). It catalyses the reaction tetradecanoate + reduced [NADPH--hemoprotein reductase] + O2 = 7-hydroxytetradecanoate + oxidized [NADPH--hemoprotein reductase] + H2O + H(+). The catalysed reaction is dodecan-1-ol + reduced [NADPH--hemoprotein reductase] + O2 = 1,5-dodecanediol + oxidized [NADPH--hemoprotein reductase] + H2O + H(+). The enzyme catalyses dodecan-1-ol + reduced [NADPH--hemoprotein reductase] + O2 = 1,4-dodecanediol + oxidized [NADPH--hemoprotein reductase] + H2O + H(+). It carries out the reaction dodecan-1-ol + reduced [NADPH--hemoprotein reductase] + O2 = 1,6-dodecanediol + oxidized [NADPH--hemoprotein reductase] + H2O + H(+). Functionally, self-sufficient cytochrome P450 monooxygenase that catalyzes the regioselective in-chain hydroxylation of alkanes, fatty alcohols, and fatty acids at the omega-7 position. Performs hydroxylation of C10-C16 n-alkanes and C12 and C14 fatty alcohols; and thereby enables the one step biocatalytic synthesis of rare alcohols such as 5-dodecanol and 7-tetradecanol. Converts 1-dodecanol into 1,5-dodecanediol as major product with very little sub-terminally hydroxylated products with the 1,4-dodecanediol and 1,6-dodecanediol more abundant. Converts dodecanoic acid to 5-hydroxydodecanoic acid which can be further converted into delta-dodecalactone by lactonization of the 5-hydroxy acid at low pH. Also gives sub-terminal hydroxylation of dodecanoic acid with 9-hydroxydodecanoic acid being the second most abundant product. In Penicillium expansum (Blue mold rot fungus), this protein is Self-sufficient cytochrome P450 monooxygenase CYP505E4.